A 906-amino-acid chain; its full sequence is Ankyrin repeat and MYND domain-containing protein 1 (906 aa).

3 MORN repeats span residues 16 to 38 (YHGQFYRDHFHGLGTYTWPDGSS), 39 to 59 (FTGTFYLSQREGYGTMHTKTM), and 61 to 83 (FQGLYKEDQRFGPGIETYPDGSQ). One copy of the ANK 1 repeat lies at 282-311 (KGYTVLAAAAMHSHLDIVNLLLDFGADVNK). The segment covering 391–400 (SMQTPESSNM) has biased composition (polar residues). A disordered region spans residues 391–411 (SMQTPESSNMLHKEEVSPVKT). ANK repeat units lie at residues 479–508 (VRKMAQSMVERRNRWMTITLLLRRGADPNL), 511–540 (VPMQALFLAVKAGDVEGVRLLLMSGAQTDI), 547–579 (QSLTPLHIAVSLPGEEGVKITELLLHVITNVDA), 623–657 (GGRTALHVACEREDNKKCARDIVRLLLSHRANPNV), 660–689 (SGHSPLSLAIASGNDLVVKELLSQGADPNL), and 701–732 (VVCDLVYEQQRSVENKIALIDRLISYGADVLN). 8 residues coordinate Zn(2+): Cys-845, Cys-848, Cys-859, Cys-862, Cys-868, Cys-872, His-881, and Cys-885. An MYND-type zinc finger spans residues 845-885 (CYQCGRSIGVRLSPCPRCYGILTCSKYCKTKAWIEFHKKDC).

The polypeptide is Ankyrin repeat and MYND domain-containing protein 1 (Ankmy1) (Mus musculus (Mouse)).